A 119-amino-acid chain; its full sequence is Ribonuclease P protein component (119 aa).

It belongs to the RnpA family. Consists of a catalytic RNA component (M1 or rnpB) and a protein subunit.

It carries out the reaction Endonucleolytic cleavage of RNA, removing 5'-extranucleotides from tRNA precursor.. RNaseP catalyzes the removal of the 5'-leader sequence from pre-tRNA to produce the mature 5'-terminus. It can also cleave other RNA substrates such as 4.5S RNA. The protein component plays an auxiliary but essential role in vivo by binding to the 5'-leader sequence and broadening the substrate specificity of the ribozyme. The sequence is that of Ribonuclease P protein component from Streptococcus equi subsp. equi (strain 4047).